The chain runs to 218 residues: Glutathione S-transferase U22 (218 aa).

A2 is subject to N-acetylalanine. The 80-residue stretch at 3 to 82 (DEVILLDFWP…YIDEVWSDKN (80 aa)) folds into the GST N-terminal domain. Residues 13-14 (SP), 39-40 (DK), 53-54 (KI), and 66-67 (ES) each bind glutathione. Residues 88 to 208 (DPYQRAQARF…LHDSEKILAF (121 aa)) enclose the GST C-terminal domain. The residue at position 149 (T149) is a Phosphothreonine.

This sequence belongs to the GST superfamily. Tau family.

The protein localises to the cytoplasm. Its subcellular location is the cytosol. The enzyme catalyses RX + glutathione = an S-substituted glutathione + a halide anion + H(+). May be involved in the conjugation of reduced glutathione to a wide number of exogenous and endogenous hydrophobic electrophiles and have a detoxification role against certain herbicides. The sequence is that of Glutathione S-transferase U22 (GSTU22) from Arabidopsis thaliana (Mouse-ear cress).